A 1132-amino-acid chain; its full sequence is Phospholipid-transporting ATPase IG (1132 aa).

Residues 1 to 66 (MQMVPSLPPA…NFLPKNLFEQ (66 aa)) lie on the Cytoplasmic side of the membrane. The helical transmembrane segment at 67-85 (FRRIANFYFLIIFLVQVTV) threads the bilayer. A topological domain (extracellular) is located at residue D86. A helical membrane pass occupies residues 87-107 (TPTSPVTSGLPLFFVITVTAI). Residues 108 to 290 (KQGYEDCLRH…SQKRSAVEKS (183 aa)) lie on the Cytoplasmic side of the membrane. Residues 291–311 (INAFLIVYLFILLTKAAVCTT) form a helical membrane-spanning segment. At 312–346 (LKYVWQSTPYNDEPWYNQKTQKERETLKVLKMFTD) the chain is on the extracellular side. The chain crosses the membrane as a helical span at residues 347–367 (FLSFMVLFNFIIPVSMYVTVE). Residues 368 to 879 (MQKFLGSFFI…YVRIAHLVQY (512 aa)) lie on the Cytoplasmic side of the membrane. The active-site 4-aspartylphosphate intermediate is the D412. 3 residues coordinate ATP: D412, K413, and T414. Position 412 (D412) interacts with Mg(2+). T414 contacts Mg(2+). Residue S445 is modified to Phosphoserine. Residues E501, F543, K566, R597, T677, G678, D679, R792, and K798 each coordinate ATP. D819 lines the Mg(2+) pocket. Positions 822 and 823 each coordinate ATP. D823 serves as a coordination point for Mg(2+). A helical transmembrane segment spans residues 880 to 900 (FFYKNLCFILPQFLYQFFCGF). Topologically, residues 901 to 908 (SQQPLYDA) are extracellular. A helical transmembrane segment spans residues 909–929 (AYLTMYNICFTSLPILAYSLL). At 930–955 (EQHINIDTLTSDPRLYMKISGNAMLQ) the chain is on the cytoplasmic side. A helical transmembrane segment spans residues 956-976 (LGPFLYWTFLAAFEGTVFFFG). Residues 977–995 (TYFLFQTASLEENGKVYGN) lie on the Extracellular side of the membrane. The helical transmembrane segment at 996–1016 (WTFGTIVFTVLVFTVTLKLAL) threads the bilayer. The Cytoplasmic portion of the chain corresponds to 1017-1026 (DTRFWTWINH). The chain crosses the membrane as a helical span at residues 1027–1047 (FVIWGSLAFYVFFSFFWGGII). Topologically, residues 1048-1069 (WPFLKQQRMYFVFAQMLSSVST) are extracellular. The helical transmembrane segment at 1070-1090 (WLAIILLIFISLFPEILLIVL) threads the bilayer. The Cytoplasmic segment spans residues 1091–1132 (KNVRRRSARRNLSCRRASDSLSARPSVRPLLLRTFSDESNVL). Phosphoserine is present on residues S1108, S1116, and S1126. The Di-leucine motif signature appears at 1116-1121 (SVRPLL).

This sequence belongs to the cation transport ATPase (P-type) (TC 3.A.3) family. Type IV subfamily. In terms of assembly, component of a P4-ATPase flippase complex which consists of a catalytic alpha subunit ATP11C and an accessory beta subunit TMEM30A. Requires Mg(2+) as cofactor. In terms of processing, proteolytically cleaved by CASP3, CASP6 and CASP7. Phosphorylated at Ser-1116 likely by PRKCA; this creates a functional di-leucine motif that is sufficient for endocytosis. Widely expressed.

It localises to the cell membrane. The protein resides in the endoplasmic reticulum membrane. It is found in the early endosome membrane. Its subcellular location is the recycling endosome membrane. It catalyses the reaction ATP + H2O + phospholipidSide 1 = ADP + phosphate + phospholipidSide 2.. The enzyme catalyses a 1,2-diacyl-sn-glycero-3-phospho-L-serine(out) + ATP + H2O = a 1,2-diacyl-sn-glycero-3-phospho-L-serine(in) + ADP + phosphate + H(+). The catalysed reaction is a 1,2-diacyl-sn-glycero-3-phosphoethanolamine(out) + ATP + H2O = a 1,2-diacyl-sn-glycero-3-phosphoethanolamine(in) + ADP + phosphate + H(+). Its activity is regulated as follows. The flippase activity is inactivated by caspase-mediated cleavage in apoptotic cells, allowing for PS exposure on the cell surface and engulfment of apoptotic cells by macrophages. The ATPase activity is up-regulated by aminophospholipids PS and PE and down-regulated by Increasing intracellular Ca2+ levels. Catalytic component of a P4-ATPase flippase complex which catalyzes the hydrolysis of ATP coupled to the transport of aminophospholipids, phosphatidylserines (PS) and phosphatidylethanolamines (PE), from the outer to the inner leaflet of the plasma membrane. Major PS-flippase in immune cell subsets. In erythrocyte plasma membrane, it is required to maintain PS in the inner leaflet preventing its exposure on the surface. This asymmetric distribution is critical for the survival of erythrocytes in circulation since externalized PS is a phagocytic signal for erythrocyte clearance by splenic macrophages. Required for B cell differentiation past the pro-B cell stage. Seems to mediate PS flipping in pro-B cells. May be involved in the transport of cholestatic bile acids. The polypeptide is Phospholipid-transporting ATPase IG (Homo sapiens (Human)).